The chain runs to 260 residues: Carbonic anhydrase 2 (260 aa).

Ser-2 carries the N-acetylserine modification. Ser-2 is subject to Phosphoserine. Residues 3–259 (HHWGYSKSNG…LKNRKIKASF (257 aa)) enclose the Alpha-carbonic anhydrase domain. Residues 16–39 (WHKEFPIANGDRQSPVDIDTGTAQ) form a disordered region. His-64 serves as the catalytic Proton donor/acceptor. Ser-87 bears the Phosphoserine mark. Residues His-94, His-96, and His-119 each contribute to the Zn(2+) site. Position 165 is a phosphoserine (Ser-165). Residue 198–199 (TT) participates in substrate binding. A Phosphoserine modification is found at Ser-232.

The protein belongs to the alpha-carbonic anhydrase family. In terms of assembly, interacts with SLC4A4 and SLC26A6. Interaction with SLC4A7 regulates SLC4A7 transporter activity. Zn(2+) serves as cofactor.

Its subcellular location is the cytoplasm. It localises to the cell membrane. It carries out the reaction hydrogencarbonate + H(+) = CO2 + H2O. The enzyme catalyses urea = cyanamide + H2O. Its activity is regulated as follows. Inhibited by acetazolamide. In terms of biological role, catalyzes the reversible hydration of carbon dioxide. Can also hydrate cyanamide to urea. Involved in the regulation of fluid secretion into the anterior chamber of the eye. Essential for bone resorption and osteoclast differentiation. Contributes to intracellular pH regulation in the duodenal upper villous epithelium during proton-coupled peptide absorption. Stimulates the chloride-bicarbonate exchange activity of SLC26A6. The polypeptide is Carbonic anhydrase 2 (Ca2) (Rattus norvegicus (Rat)).